A 361-amino-acid polypeptide reads, in one-letter code: Phospho-N-acetylmuramoyl-pentapeptide-transferase (361 aa).

Transmembrane regions (helical) follow at residues 26–46, 71–91, 97–117, 134–154, 168–188, 200–220, 236–256, 264–284, 290–310, and 338–358; these read AGGAILTSLLICFVAGPCIIE, TPTMGGLLILLSVVASTFLWA, FILWLLTGTLWLGFLGFCDDY, IFGQTVFAAVLAAYLNFFPSN, GFFINFSFLYALFVIIVIVGS, GLAIGNITIVAFSLTLFAYFA, GAGEISIFLFAVVGSSLGFLW, IFMGDTGSLFLGGVLGMVSLF, VLVLLGGVFVIEALSVLIQIF, and KVTVRFWIAGVILAILSFASL.

It belongs to the glycosyltransferase 4 family. MraY subfamily. Mg(2+) is required as a cofactor.

It is found in the cell membrane. The catalysed reaction is UDP-N-acetyl-alpha-D-muramoyl-L-alanyl-gamma-D-glutamyl-meso-2,6-diaminopimeloyl-D-alanyl-D-alanine + di-trans,octa-cis-undecaprenyl phosphate = di-trans,octa-cis-undecaprenyl diphospho-N-acetyl-alpha-D-muramoyl-L-alanyl-D-glutamyl-meso-2,6-diaminopimeloyl-D-alanyl-D-alanine + UMP. It participates in cell wall biogenesis; peptidoglycan biosynthesis. Its function is as follows. Catalyzes the initial step of the lipid cycle reactions in the biosynthesis of the cell wall peptidoglycan: transfers peptidoglycan precursor phospho-MurNAc-pentapeptide from UDP-MurNAc-pentapeptide onto the lipid carrier undecaprenyl phosphate, yielding undecaprenyl-pyrophosphoryl-MurNAc-pentapeptide, known as lipid I. The protein is Phospho-N-acetylmuramoyl-pentapeptide-transferase of Endomicrobium trichonymphae.